Reading from the N-terminus, the 177-residue chain is Large ribosomal subunit protein uL6 (177 aa).

It belongs to the universal ribosomal protein uL6 family. In terms of assembly, part of the 50S ribosomal subunit.

This protein binds to the 23S rRNA, and is important in its secondary structure. It is located near the subunit interface in the base of the L7/L12 stalk, and near the tRNA binding site of the peptidyltransferase center. This chain is Large ribosomal subunit protein uL6, found in Chromobacterium violaceum (strain ATCC 12472 / DSM 30191 / JCM 1249 / CCUG 213 / NBRC 12614 / NCIMB 9131 / NCTC 9757 / MK).